Consider the following 330-residue polypeptide: Ribose-phosphate pyrophosphokinase (330 aa).

Residues 40–42 (DGE) and 99–100 (RQ) each bind ATP. The Mg(2+) site is built by H133 and D174. K197 is an active-site residue. D-ribose 5-phosphate is bound by residues R199, D223, and 227–231 (DTGGT).

Belongs to the ribose-phosphate pyrophosphokinase family. Class I subfamily. In terms of assembly, homohexamer. It depends on Mg(2+) as a cofactor.

It localises to the cytoplasm. The enzyme catalyses D-ribose 5-phosphate + ATP = 5-phospho-alpha-D-ribose 1-diphosphate + AMP + H(+). It functions in the pathway metabolic intermediate biosynthesis; 5-phospho-alpha-D-ribose 1-diphosphate biosynthesis; 5-phospho-alpha-D-ribose 1-diphosphate from D-ribose 5-phosphate (route I): step 1/1. Functionally, involved in the biosynthesis of the central metabolite phospho-alpha-D-ribosyl-1-pyrophosphate (PRPP) via the transfer of pyrophosphoryl group from ATP to 1-hydroxyl of ribose-5-phosphate (Rib-5-P). This Ureaplasma parvum serovar 3 (strain ATCC 700970) protein is Ribose-phosphate pyrophosphokinase.